The following is a 383-amino-acid chain: Inactive serine protease 54 (383 aa).

A signal peptide spans 1-20; sequence MAEMRGMLLMLLYISHSSSA. A Peptidase S1 domain is found at 21 to 258; it reads ICGIQKATIA…YSDWITAKTR (238 aa). A glycan (N-linked (GlcNAc...) asparagine) is linked at Asn-113. 3 disulfides stabilise this stretch: Cys-154–Cys-216, Cys-185–Cys-195, and Cys-206–Cys-237. Positions 305–334 are disordered; it reads QGQRMSTKSNKQKDAGQNFRVNRQPETSGP. The segment covering 323-334 has biased composition (polar residues); that stretch reads FRVNRQPETSGP.

This sequence belongs to the peptidase S1 family. Plasma kallikrein subfamily.

It localises to the secreted. This chain is Inactive serine protease 54 (Prss54), found in Mus musculus (Mouse).